A 344-amino-acid polypeptide reads, in one-letter code: Protein Tob2 (344 aa).

2 disordered regions span residues 144–169 (GSQDSSLSNSPSPSFGQSPSPTFIPR) and 191–225 (MKKGGGAASGGGVASSGAGGQQPPQQPRMARSPTN). Residues 145 to 164 (SQDSSLSNSPSPSFGQSPSP) show a composition bias toward low complexity. Residues 194–210 (GGGAASGGGVASSGAGG) show a composition bias toward gly residues. Residues 211–225 (QQPPQQPRMARSPTN) show a composition bias toward low complexity. The residue at position 254 (Ser254) is a Phosphoserine.

Belongs to the BTG family. In terms of assembly, associates with CAF1. As to expression, ubiquitous.

It is found in the cytoplasm. Functionally, anti-proliferative protein inhibits cell cycle progression from the G0/G1 to S phases. The sequence is that of Protein Tob2 (TOB2) from Homo sapiens (Human).